Reading from the N-terminus, the 128-residue chain is Large ribosomal subunit protein uL22 (128 aa).

The protein belongs to the universal ribosomal protein uL22 family. In terms of assembly, part of the 50S ribosomal subunit.

This protein binds specifically to 23S rRNA; its binding is stimulated by other ribosomal proteins, e.g. L4, L17, and L20. It is important during the early stages of 50S assembly. It makes multiple contacts with different domains of the 23S rRNA in the assembled 50S subunit and ribosome. Its function is as follows. The globular domain of the protein is located near the polypeptide exit tunnel on the outside of the subunit, while an extended beta-hairpin is found that lines the wall of the exit tunnel in the center of the 70S ribosome. This Methylobacterium radiotolerans (strain ATCC 27329 / DSM 1819 / JCM 2831 / NBRC 15690 / NCIMB 10815 / 0-1) protein is Large ribosomal subunit protein uL22.